The following is a 168-amino-acid chain: Pleiotrophin (168 aa).

An N-terminal signal peptide occupies residues 1–32; sequence MQTPQFLQQRRKFAAAFLAFIFLLAVVDTAEA. 5 disulfides stabilise this stretch: Cys47-Cys76, Cys55-Cys85, Cys62-Cys89, Cys99-Cys131, and Cys109-Cys141. 2 chondroitin sulfate binding regions span residues 92–99 and 123–131; these read KKQFGAEC and KRALHNADC. Positions 139–168 are disordered; that stretch reads KPCGKVTKPKPQAESKKKKKEGKKQEKMLD. Residues 147–168 form a chondroitin sulfate A binding region; it reads PKPQAESKKKKKEGKKQEKMLD.

The protein belongs to the pleiotrophin family. As to quaternary structure, interacts with ALK and NEK6. Interacts with PTPRZ1 (via chondroitin sulfate groups); promotes formation of homooligomers; oligomerization impairs tyrosine phosphatase activity. Forms a complex with PTPRZ1 and CTNNB1; this complex inactivates PTPRZ1 protein tyrosine phosphatase activity through PTN interaction and stimulates tyrosine phosphorylation of CTNNB1. Interacts with ITGB3 and ITGA5. Forms a complex with PTPRZ1 and integrin alpha-V/beta-3 (ITGAV:ITGB3) that stimulates endothelial cell migration through ITGB3 'Tyr-773' phosphorylation. Interacts with SDC3 (via heparan sulfate chains); this interaction mediates the neurite outgrowth-promoting signal from PTN to the cytoskeleton of growing neurites; this interaction mediates osteoblast recruitment. Interacts with GPC2 (via heparan sulfate); this interaction promotes neurite outgrowth through binding of PTN with chondroitin sulfate of proteoglycans, thereby releasing PTPRS of chondroitin sulfate proteoglycans (CSPGs) and leading to binding with heparan sulfate of GPC2. Post-translationally, phosphorylated by NEK6.

The protein resides in the secreted. Its function is as follows. Secreted growth factor that mediates its signal through cell-surface proteoglycan and non-proteoglycan receptors. Binds cell-surface proteoglycan receptor via their chondroitin sulfate (CS) groups. Thereby regulates many processes like cell proliferation, cell survival, cell growth, cell differentiation and cell migration in several tissues namely neuron and bone. Also plays a role in synaptic plasticity and learning-related behavior by inhibiting long-term synaptic potentiation. Binds PTPRZ1, leading to neutralization of the negative charges of the CS chains of PTPRZ1, inducing PTPRZ1 clustering, thereby causing the dimerization and inactivation of its phosphatase activity leading to increased tyrosine phosphorylation of each of the PTPRZ1 substrates like ALK, CTNNB1 or AFAP1L2 in order to activate the PI3K-AKT pathway. Through PTPRZ1 binding controls oligodendrocyte precursor cell differentiation by enhancing the phosphorylation of AFAP1L2 in order to activate the PI3K-AKT pathway. Forms a complex with PTPRZ1 and integrin alpha-V/beta-3 (ITGAV:ITGB3) that stimulates endothelial cell migration through SRC dephosphorylation and activation that consequently leads to ITGB3 'Tyr-773' phosphorylation. In adult hippocampus promotes dendritic arborization, spine development, and functional integration and connectivity of newborn granule neurons through ALK by activating AKT signaling pathway. Binds GPC2 and chondroitin sulfate proteoglycans (CSPGs) at the neuron surface, leading to abrogation of binding between PTPRS and CSPGs and neurite outgrowth promotion. Binds SDC3 and mediates bone formation by recruiting and attaching osteoblasts/osteoblast precursors to the sites for new bone deposition. Binds ALK and promotes cell survival and cell proliferation through MAPK pathway activation. Inhibits proliferation and enhances differentiation of neural stem cells by inhibiting FGF2-induced fibroblast growth factor receptor signaling pathway. Mediates regulatory mechanisms in normal hemostasis and in hematopoietic regeneration and in maintaining the balance of myeloid and lymphoid regeneration. In addition may play a role in the female reproductive system, auditory response and the progesterone-induced decidualization pathway. The sequence is that of Pleiotrophin from Sus scrofa (Pig).